We begin with the raw amino-acid sequence, 176 residues long: Small ribosomal subunit protein uS5 (176 aa).

In terms of domain architecture, S5 DRBM spans 11–74 (LSEVLVDVNR…QAAKKRMMKV (64 aa)).

Belongs to the universal ribosomal protein uS5 family. As to quaternary structure, part of the 30S ribosomal subunit. Contacts proteins S4 and S8.

Functionally, with S4 and S12 plays an important role in translational accuracy. Located at the back of the 30S subunit body where it stabilizes the conformation of the head with respect to the body. This is Small ribosomal subunit protein uS5 from Rickettsia conorii (strain ATCC VR-613 / Malish 7).